We begin with the raw amino-acid sequence, 712 residues long: Polyribonucleotide nucleotidyltransferase (712 aa).

Residues aspartate 487 and aspartate 493 each contribute to the Mg(2+) site. In terms of domain architecture, KH spans proline 554–isoleucine 613. Residues glycine 623 to lysine 691 enclose the S1 motif domain.

This sequence belongs to the polyribonucleotide nucleotidyltransferase family. Mg(2+) serves as cofactor.

The protein localises to the cytoplasm. It catalyses the reaction RNA(n+1) + phosphate = RNA(n) + a ribonucleoside 5'-diphosphate. Functionally, involved in mRNA degradation. Catalyzes the phosphorolysis of single-stranded polyribonucleotides processively in the 3'- to 5'-direction. The polypeptide is Polyribonucleotide nucleotidyltransferase (Bacillus anthracis (strain CDC 684 / NRRL 3495)).